Here is a 305-residue protein sequence, read N- to C-terminus: MSTIDKEAVKLYLMQLQDQICQRLEQEDGKATFIEDAWHREPGDRLGGGGRTRVMRNGNVFEQGGVNFSHVQGNAMPASATAHRPELAGRRFEAMGVSLVMHPHNPYVPTSHANVRFFIAEKEGEAPIWWFGGGFDLTPFYPFEEDCQFWHNTAKEVCAPFGADVYAQHKAWCDDYFYLPHRGETRGIGGLFFDDLNQWEFDKCFDYIKAVGEGYCDAYLPIVERRKVTEYGEREREFQLYRRGRYVEFNLVYDRGTLFGLQSGGRTESILMSMPPLARWEYSYEPQADSPEASLYQHYLKPREW.

S98 contacts substrate. A divalent metal cation is bound by residues H102 and H112. Residue H112 is the Proton donor of the active site. Residue 114 to 116 (NVR) coordinates substrate. 2 residues coordinate a divalent metal cation: H151 and H181. The segment at 246–281 (YVEFNLVYDRGTLFGLQSGGRTESILMSMPPLARWE) is important for dimerization. 264 to 266 (GGR) provides a ligand contact to substrate.

The protein belongs to the aerobic coproporphyrinogen-III oxidase family. Homodimer. Requires a divalent metal cation as cofactor.

The protein localises to the cytoplasm. It catalyses the reaction coproporphyrinogen III + O2 + 2 H(+) = protoporphyrinogen IX + 2 CO2 + 2 H2O. The protein operates within porphyrin-containing compound metabolism; protoporphyrin-IX biosynthesis; protoporphyrinogen-IX from coproporphyrinogen-III (O2 route): step 1/1. In terms of biological role, involved in the heme biosynthesis. Catalyzes the aerobic oxidative decarboxylation of propionate groups of rings A and B of coproporphyrinogen-III to yield the vinyl groups in protoporphyrinogen-IX. The chain is Oxygen-dependent coproporphyrinogen-III oxidase from Vibrio vulnificus (strain YJ016).